The sequence spans 504 residues: uncharacterized protein (504 aa).

3 helical membrane passes run 146–166 (TSAGYAKIVGCALGFPVINIA), 196–216 (SSAAILITGAGAIGTALADVL), and 330–350 (SMALTMALLAAAVLYASVAVA). 372 to 492 (FLNIDVPLQA…EIAYGVARTR (121 aa)) serves as a coordination point for a nucleoside 3',5'-cyclic phosphate.

The protein resides in the cell membrane. This is an uncharacterized protein from Mycobacterium tuberculosis (strain CDC 1551 / Oshkosh).